The following is a 368-amino-acid chain: Flagellar P-ring protein (368 aa).

The signal sequence occupies residues 1–22 (MLIPLARAVLALALLGAGAAHA).

This sequence belongs to the FlgI family. In terms of assembly, the basal body constitutes a major portion of the flagellar organelle and consists of four rings (L,P,S, and M) mounted on a central rod.

It is found in the periplasm. It localises to the bacterial flagellum basal body. Assembles around the rod to form the L-ring and probably protects the motor/basal body from shearing forces during rotation. This Bordetella bronchiseptica (strain ATCC BAA-588 / NCTC 13252 / RB50) (Alcaligenes bronchisepticus) protein is Flagellar P-ring protein.